Consider the following 1131-residue polypeptide: Protein TOPLESS (1131 aa).

The region spanning 4–36 is the LisH domain; that stretch reads LSRELVFLILQFLDEEKFKETVHKLEQESGFFF. The region spanning 34–92 is the CTLH domain; the sequence is FFFNMKYFEDEVHNGNWDEVEKYLSGFTKVDDNRYSMKIFFEIRKQKYLEALDKHDRPK. Position 214 is a phosphoserine (Ser-214). Residues 286 to 305 are disordered; the sequence is TPPTNASLDYPSADSEHVSK. 15 WD repeats span residues 353-393, 415-454, 460-501, 504-545, 548-591, 595-634, 639-678, 710-756, 766-805, 833-871, 874-914, 917-956, 967-1005, 1010-1049, and 1060-1102; these read SQGS…RLVQ, EPVV…DMRQ, AHVG…KRHT, GHEA…SRVD, APGR…VKRT, FHKR…LLTA, GGLQ…RLLH, DRSA…EPSQ, LRVA…RNAT, NPEE…TMAT, PPPP…VKSK, GHSK…KQRS, NSAP…CMKQ, ESLA…LRCR, and LSNS…GKWG. The disordered stretch occupies residues 1100–1131; sequence KWGVAPPAENGSASGAPTAPSVGASASDQPQR.

Tetramer. Homodimer. Interacts (via the LisH domain) with WUS (via the C-terminal domain). Interacts with NINJA/AFPH2. Interacts with IAA1; IAA2; IAA3; IAA4; IAA6; IAA8; IAA9; IAA11; IAA13; IAA14; IAA17; IAA18; IAA26; IAA27 and IAA28. Interacts (via the LisH domain) with IAA12/BDL (via domain I). Can form a complex with IAA12 and ARF5. Interacts with AP2 (via EAR motif) and HDA19. Interacts with TIFY5A/JAZ8 (via EAR motif). Interacts with SPEAR3/TIE1. Interacts with SPL (via EAR motif). Interacts with ZAT2 and ZAT3 (via the EAR motif). Interacts with JAZ13 (via EAR motif). Interacts with GIR1 and GIR2. In terms of tissue distribution, expressed in embryo and in extraembryonic tissues. Expressed in inflorescences, flowers, floral meristems, developing anthers and ovules. Detected in the vascular tissues, shoot apical meristem, cotyledons and young leaves. Expressed ubiquitously in the pistils, stamens and pollens.

The protein localises to the nucleus. Its function is as follows. Transcriptional corepressor. May repress the expression of root-promoting genes in the top half of the embryo to allow proper differentiation of the shoot pole during the transition stage of embryogenesis. Regulates the expression of PLT1 and PLT2. Negative regulator of jasmonate responses. Negative regulator of auxin responses. Negative regulator of multiple floral organ identity genes. Required for ovule development. The protein is Protein TOPLESS (TPL) of Arabidopsis thaliana (Mouse-ear cress).